A 202-amino-acid chain; its full sequence is 3-isopropylmalate dehydratase small subunit (202 aa).

It belongs to the LeuD family. LeuD type 1 subfamily. As to quaternary structure, heterodimer of LeuC and LeuD.

It catalyses the reaction (2R,3S)-3-isopropylmalate = (2S)-2-isopropylmalate. Its pathway is amino-acid biosynthesis; L-leucine biosynthesis; L-leucine from 3-methyl-2-oxobutanoate: step 2/4. Catalyzes the isomerization between 2-isopropylmalate and 3-isopropylmalate, via the formation of 2-isopropylmaleate. The polypeptide is 3-isopropylmalate dehydratase small subunit (Rhizobium etli (strain CIAT 652)).